Consider the following 319-residue polypeptide: Ferrochelatase (319 aa).

Residues histidine 194 and glutamate 275 each coordinate Fe cation.

The protein belongs to the ferrochelatase family.

It is found in the cytoplasm. It carries out the reaction heme b + 2 H(+) = protoporphyrin IX + Fe(2+). Its pathway is porphyrin-containing compound metabolism; protoheme biosynthesis; protoheme from protoporphyrin-IX: step 1/1. Catalyzes the ferrous insertion into protoporphyrin IX. The polypeptide is Ferrochelatase (Vibrio vulnificus (strain CMCP6)).